Reading from the N-terminus, the 116-residue chain is Large ribosomal subunit protein bL20 (116 aa).

The protein belongs to the bacterial ribosomal protein bL20 family.

Binds directly to 23S ribosomal RNA and is necessary for the in vitro assembly process of the 50S ribosomal subunit. It is not involved in the protein synthesizing functions of that subunit. The polypeptide is Large ribosomal subunit protein bL20 (Helicobacter acinonychis (strain Sheeba)).